Reading from the N-terminus, the 601-residue chain is RNA-binding protein MEX3B (601 aa).

Disordered regions lie at residues 1-39 (MPSSLFADLERNGSGGGGGGGGGGGGGGSGGGETLDDQR) and 90-109 (GRQGGSGRDGDRRGFSISPT). Serine 4 carries the phosphoserine modification. Positions 13–33 (GSGGGGGGGGGGGGGGSGGGE) are enriched in gly residues. 2 KH domains span residues 98 to 159 (DGDR…RREI) and 192 to 253 (QTTI…REEI). 2 disordered regions span residues 284-332 (LHHG…TDSY) and 344-448 (TSRL…GGAS). Phosphoserine is present on serine 320. Low complexity-rich tracts occupy residues 320–331 (SSSSLGSASTDS) and 362–371 (NGNNNNNGNG). A compositionally biased stretch (pro residues) spans 395–404 (DPAPAPPPGT). Over residues 420 to 442 (AAPVSSSCSSSASSSASSSSVVF) the composition is skewed to low complexity. Serine 494 carries the phosphoserine modification. The disordered stretch occupies residues 514-546 (LPGLPSSDTSGSSSSSSSSSSSSSSSSGLRRKG). Residues 519 to 540 (SSDTSGSSSSSSSSSSSSSSSS) are compositionally biased toward low complexity. Residues 550–590 (CSVCFESEVIAALVPCGHNLFCMECANRICEKSEPECPVCH) form an RING-type zinc finger.

Post-translationally, phosphorylation at Ser-494 creates a docking site for 14-3-3, which stabilizes the protein and modulates its ability to bind RNA.

It localises to the cytoplasm. Its subcellular location is the nucleus. The protein localises to the P-body. The protein resides in the cytoplasmic granule. RNA-binding protein. May be involved in post-transcriptional regulatory mechanisms. The protein is RNA-binding protein MEX3B (Mex3b) of Mus musculus (Mouse).